The primary structure comprises 906 residues: Probable disease resistance RPP8-like protein 2 (906 aa).

Residues 15-68 are a coiled coil; sequence ELLSRESARLNGIDEQVDGLKRQLGRLQSLLKDADAKKNETERVRNFLEDVKDI. The region spanning 144–454 is the NB-ARC domain; it reads LQERQREIRQ…AEGIITPFHD (311 aa). Residue 190 to 197 coordinates ATP; the sequence is GMGGIGKT. LRR repeat units follow at residues 573–597, 598–621, 623–644, 646–671, 672–696, 704–727, 740–766, 767–790, 791–818, and 840–865; these read LPLLRVLDLSYVQFEGGKLPSSIGD, LIHLRFLSLYEAGVSHLPSSLGNL, LLLCLNLGVADRLLVHVPNVLK, MQELRYLRLPRSMPAKTKLELGDLVN, LESLTNFSTKHGSVTDLLRMTKLSV, ECTFETLLLSLRELRNLETLSFHD, LLVLDFIHLKDLTLSMHLPRFPDQYRF, PPHLAHIWLIGCRMEEDPMPILEK, LLHLKSVYLSSGAFLGRRMVCSKGGFPQ, and MPCLRTLTIDNCKKLKQLPDGLKYVT.

Belongs to the disease resistance NB-LRR family. RPP8/HRT subfamily.

Its function is as follows. Potential disease resistance protein. This is Probable disease resistance RPP8-like protein 2 (RPP8L2) from Arabidopsis thaliana (Mouse-ear cress).